We begin with the raw amino-acid sequence, 101 residues long: Chaperone modulatory protein CbpM (101 aa).

It belongs to the CbpM family.

Functionally, interacts with CbpA and inhibits both the DnaJ-like co-chaperone activity and the DNA binding activity of CbpA. Together with CbpA, modulates the activity of the DnaK chaperone system. Does not inhibit the co-chaperone activity of DnaJ. The protein is Chaperone modulatory protein CbpM of Escherichia coli (strain K12 / MC4100 / BW2952).